A 259-amino-acid polypeptide reads, in one-letter code: Sugar fermentation stimulation protein homolog (259 aa).

Belongs to the SfsA family.

The chain is Sugar fermentation stimulation protein homolog from Prochlorococcus marinus (strain MIT 9303).